Consider the following 419-residue polypeptide: MATTIPTTATATMCPSPPVPTISPLLRTTHQCQPSPSLSSPFSIKLSTALVCGDTTVDRVVDSSVMIKPEKWGIQSEKRRKRRRRRRVGYERLEPEEEENAGVEAEAETISVPVVGASRSGFLSRLEEVQLCLYLKEGAKLENLGTSVEENEMVSVLLASGRGKKKRSANEILCRRKEAREKITRCYRRLVVSIATGYQGKGLNLQDLIQEGSIGLLRGAERFDPDRGYKLSTYVYWWIKQAILRAIAHKSRLVKLPGSMWELTAKVAEASNVLTRKLRRQPSCEEIAEHLNLNVSAVRLAVERSRSPVSLDRVASQNGRMTLQEIVRGPDETRPEEMVKREHMKHEIEQLLGSLTARESRVLGLYFGLNGETPMSFEEIGKSLKLSRERVRQINGIALKKLRNVHNVNDLKIYYSSSE.

The transit peptide at 1–52 (MATTIPTTATATMCPSPPVPTISPLLRTTHQCQPSPSLSSPFSIKLSTALVC) directs the protein to the chloroplast. A Polymerase core binding motif is present at residues 207 to 220 (DLIQEGSIGLLRGA). The H-T-H motif DNA-binding region spans 377 to 396 (FEEIGKSLKLSRERVRQING).

It belongs to the sigma-70 factor family. Mostly expressed in leaves, and to a lesser extent in roots. Present in seedlings.

It is found in the plastid. The protein localises to the chloroplast. Sigma factors are initiation factors that promote the attachment of plastid-encoded RNA polymerase (PEP) to specific initiation sites and are then released. Regulates transcription of the ndhF gene which codes for a subunit of the plastid NDH [NAD(P)H dehydrogenase] complex. This chain is RNA polymerase sigma factor sigD, chloroplastic (SIGD), found in Arabidopsis thaliana (Mouse-ear cress).